Here is a 155-residue protein sequence, read N- to C-terminus: Nodulin-related protein 2 (155 aa).

Position 1 is an N-acetylmethionine (M1). Disordered regions lie at residues 1 to 37 and 85 to 155; these read MNFI…PATN and DEKS…GFLK. Basic and acidic residues predominate over residues 95 to 106; sequence DKAEKYLNDYES. Positions 120 to 130 are enriched in low complexity; the sequence is SQAEPASQPEP.

In terms of assembly, interacts with DEK3.

Its function is as follows. May be a negative regulator of the ABA signaling/synthesis pathway. In Arabidopsis thaliana (Mouse-ear cress), this protein is Nodulin-related protein 2.